The chain runs to 193 residues: Transcriptional activator GvpE2 (193 aa).

Residue 143–148 (KRKVYR) participates in DNA binding. The leucine-zipper stretch occupies residues 153-184 (QAAIEHVDSVVLQLLTFAVGLQTIMADCIVNQ).

As to quaternary structure, homodimer. Interacts with endogenous GvpD, also with GvpD from H.mediterranei.

It localises to the cytoplasm. Its activity is regulated as follows. Degraded once GvpD is translated; degradation requires 'Arg-494' of GvpD; tested in transgenic H.volcanii. Fusion of green fluorescent protein to its C-terminus partially protects it from degradation. Functionally, plays a regulatory role in gas vesicle synthesis, required to activate transcription of the c-gvpA operon. Gas vesicles are hollow, gas filled proteinaceous nanostructures found in several microbial planktonic microorganisms. They allow positioning of halobacteria at the optimal depth for growth in the poorly aerated, shallow brine pools of their habitat. Expression of 2 c-vac DNA fragments containing 2 divergently transcribed regions (gvpE-gvpF-gvpG-gvpH-gvpI-gvpJ-gvpK-gvpL-gvpM and gvpA-gvpC-gvpN-gvpO) allows H.volcanii to produce gas vesicles. All site-directed mutagenesis is tested in H.volcanii. The chain is Transcriptional activator GvpE2 from Halobacterium salinarum (strain ATCC 700922 / JCM 11081 / NRC-1) (Halobacterium halobium).